Here is a 221-residue protein sequence, read N- to C-terminus: Urease accessory protein UreF (221 aa).

Belongs to the UreF family. In terms of assembly, ureD, UreF and UreG form a complex that acts as a GTP-hydrolysis-dependent molecular chaperone, activating the urease apoprotein by helping to assemble the nickel containing metallocenter of UreC. The UreE protein probably delivers the nickel.

Its subcellular location is the cytoplasm. In terms of biological role, required for maturation of urease via the functional incorporation of the urease nickel metallocenter. The protein is Urease accessory protein UreF of Teredinibacter turnerae (strain ATCC 39867 / T7901).